Reading from the N-terminus, the 191-residue chain is Fe/S biogenesis protein NfuA (191 aa).

[4Fe-4S] cluster contacts are provided by cysteine 149 and cysteine 152.

The protein belongs to the NfuA family. Homodimer. It depends on [4Fe-4S] cluster as a cofactor.

Functionally, involved in iron-sulfur cluster biogenesis. Binds a 4Fe-4S cluster, can transfer this cluster to apoproteins, and thereby intervenes in the maturation of Fe/S proteins. Could also act as a scaffold/chaperone for damaged Fe/S proteins. The polypeptide is Fe/S biogenesis protein NfuA (Edwardsiella ictaluri (strain 93-146)).